The sequence spans 80 residues: D-alanyl carrier protein 2 (80 aa).

A Carrier domain is found at 1–80 (MIMDDVKATV…KIVAKVASLQ (80 aa)). At S38 the chain carries O-(pantetheine 4'-phosphoryl)serine.

This sequence belongs to the DltC family. Post-translationally, 4'-phosphopantetheine is transferred from CoA to a specific serine of apo-DCP.

Its subcellular location is the cytoplasm. Its pathway is cell wall biogenesis; lipoteichoic acid biosynthesis. Carrier protein involved in the D-alanylation of lipoteichoic acid (LTA). The loading of thioester-linked D-alanine onto DltC is catalyzed by D-alanine--D-alanyl carrier protein ligase DltA. The DltC-carried D-alanyl group is further transferred to cell membrane phosphatidylglycerol (PG) by forming an ester bond, probably catalyzed by DltD. D-alanylation of LTA plays an important role in modulating the properties of the cell wall in Gram-positive bacteria, influencing the net charge of the cell wall. In Lactiplantibacillus plantarum (strain ATCC BAA-793 / NCIMB 8826 / WCFS1) (Lactobacillus plantarum), this protein is D-alanyl carrier protein 2.